The chain runs to 286 residues: UDP-3-O-acyl-N-acetylglucosamine deacetylase (286 aa).

Zn(2+) contacts are provided by His79, His237, and Asp241. The active-site Proton donor is His264.

The protein belongs to the LpxC family. Requires Zn(2+) as cofactor.

The catalysed reaction is a UDP-3-O-[(3R)-3-hydroxyacyl]-N-acetyl-alpha-D-glucosamine + H2O = a UDP-3-O-[(3R)-3-hydroxyacyl]-alpha-D-glucosamine + acetate. It functions in the pathway glycolipid biosynthesis; lipid IV(A) biosynthesis; lipid IV(A) from (3R)-3-hydroxytetradecanoyl-[acyl-carrier-protein] and UDP-N-acetyl-alpha-D-glucosamine: step 2/6. Catalyzes the hydrolysis of UDP-3-O-myristoyl-N-acetylglucosamine to form UDP-3-O-myristoylglucosamine and acetate, the committed step in lipid A biosynthesis. In Brucella abortus (strain 2308), this protein is UDP-3-O-acyl-N-acetylglucosamine deacetylase.